A 260-amino-acid chain; its full sequence is Thiazole synthase (260 aa).

Catalysis depends on lysine 102, which acts as the Schiff-base intermediate with DXP. 1-deoxy-D-xylulose 5-phosphate contacts are provided by residues glycine 163, 189-190, and 211-212; these read AG and NT.

The protein belongs to the ThiG family. In terms of assembly, homotetramer. Forms heterodimers with either ThiH or ThiS.

It localises to the cytoplasm. It catalyses the reaction [ThiS sulfur-carrier protein]-C-terminal-Gly-aminoethanethioate + 2-iminoacetate + 1-deoxy-D-xylulose 5-phosphate = [ThiS sulfur-carrier protein]-C-terminal Gly-Gly + 2-[(2R,5Z)-2-carboxy-4-methylthiazol-5(2H)-ylidene]ethyl phosphate + 2 H2O + H(+). It participates in cofactor biosynthesis; thiamine diphosphate biosynthesis. In terms of biological role, catalyzes the rearrangement of 1-deoxy-D-xylulose 5-phosphate (DXP) to produce the thiazole phosphate moiety of thiamine. Sulfur is provided by the thiocarboxylate moiety of the carrier protein ThiS. In vitro, sulfur can be provided by H(2)S. This is Thiazole synthase from Geobacter metallireducens (strain ATCC 53774 / DSM 7210 / GS-15).